Reading from the N-terminus, the 292-residue chain is 4-hydroxy-tetrahydrodipicolinate synthase (292 aa).

Thr-45 is a pyruvate binding site. The Proton donor/acceptor role is filled by Tyr-133. The active-site Schiff-base intermediate with substrate is the Lys-161. Ile-203 is a pyruvate binding site.

The protein belongs to the DapA family. In terms of assembly, homotetramer; dimer of dimers.

Its subcellular location is the cytoplasm. The enzyme catalyses L-aspartate 4-semialdehyde + pyruvate = (2S,4S)-4-hydroxy-2,3,4,5-tetrahydrodipicolinate + H2O + H(+). It participates in amino-acid biosynthesis; L-lysine biosynthesis via DAP pathway; (S)-tetrahydrodipicolinate from L-aspartate: step 3/4. In terms of biological role, catalyzes the condensation of (S)-aspartate-beta-semialdehyde [(S)-ASA] and pyruvate to 4-hydroxy-tetrahydrodipicolinate (HTPA). This is 4-hydroxy-tetrahydrodipicolinate synthase from Salmonella paratyphi A (strain AKU_12601).